A 550-amino-acid chain; its full sequence is Phospholipase B-like 1 (550 aa).

Residues 1–39 (MCHRSHGRSLRPPSPLLLLLPLLLQSPWAAGAAEKHNSA) form the signal peptide. N-linked (GlcNAc...) (high mannose) asparagine; alternate glycosylation is present at N72. An N-linked (GlcNAc...) (hybrid) asparagine; alternate glycan is attached at N72. The propeptide at 210 to 228 (LSPTKSSSLKKFKIWEMGH) is removed in mature form. N-linked (GlcNAc...) (high mannose) asparagine; alternate glycosylation is found at N309 and N412. Residues N309 and N412 are each glycosylated (N-linked (GlcNAc...) (hybrid) asparagine; alternate). 2 disulfides stabilise this stretch: C471–C476 and C475–C490. An N-linked (GlcNAc...) (high mannose) asparagine; alternate glycan is attached at N527. An N-linked (GlcNAc...) (hybrid) asparagine; alternate glycan is attached at N527.

Belongs to the phospholipase B-like family. May form a homodimer, each monomer is composed of a chain A and a chain B. The maturation cleavages that produces chains A and B are required to open the putative substrate binding pocket. Both chains A and B remain associated in the mature protein.

The protein resides in the lysosome. In terms of biological role, exhibits weak phospholipase activity, acting on various phospholipids, including phosphatidylcholine, phosphatidylinositol, phosphatidylethanolamine and lysophospholipids. However, in view of the small size of the putative binding pocket, it has been proposed that it may act rather as an amidase or a peptidase. This Rattus norvegicus (Rat) protein is Phospholipase B-like 1 (Plbd1).